A 308-amino-acid polypeptide reads, in one-letter code: General transcription factor IIH subunit 3 (308 aa).

The C4-type zinc-finger motif lies at 268–285 (CSVCLSIFCNFSPICTTC).

This sequence belongs to the TFB4 family. In terms of assembly, part of a TFIID-containing RNA polymerase II pre-initiation complex that is composed of TBP and at least GTF2A1, GTF2A2, GTF2E1, GTF2E2, GTF2F1, GTF2H2, GTF2H3, GTF2H4, GTF2H5, GTF2B, TCEA1, ERCC2, ERCC3, TAF1, TAF2, TAF3, TAF4, TAF5, TAF6, TAF7, TAF8, TAF9, TAF10, TAF11, TAF12 and TAF13. Component of the 7-subunit TFIIH core complex composed of XPB/ERCC3, XPD/ERCC2, GTF2H1, GTF2H2, GTF2H3, GTF2H4 and GTF2H5, which is active in NER. The core complex associates with the 3-subunit CDK-activating kinase (CAK) module composed of CCNH/cyclin H, CDK7 and MNAT1 to form the 10-subunit holoenzyme (holo-TFIIH) active in transcription. Interacts with RARA; the interaction requires prior phosphorylation of RARA on 'Ser-369' which then enhances interaction of RARA with CDK7.

It is found in the nucleus. Its function is as follows. Component of the general transcription and DNA repair factor IIH (TFIIH) core complex, which is involved in general and transcription-coupled nucleotide excision repair (NER) of damaged DNA and, when complexed to CAK, in RNA transcription by RNA polymerase II. In NER, TFIIH acts by opening DNA around the lesion to allow the excision of the damaged oligonucleotide and its replacement by a new DNA fragment. In transcription, TFIIH has an essential role in transcription initiation. When the pre-initiation complex (PIC) has been established, TFIIH is required for promoter opening and promoter escape. Phosphorylation of the C-terminal tail (CTD) of the largest subunit of RNA polymerase II by the kinase module CAK controls the initiation of transcription. The protein is General transcription factor IIH subunit 3 (GTF2H3) of Homo sapiens (Human).